Here is a 297-residue protein sequence, read N- to C-terminus: Homoserine kinase (297 aa).

Position 82 to 92 (82 to 92 (PVSRGLGSSAA)) interacts with ATP.

It belongs to the GHMP kinase family. Homoserine kinase subfamily.

It is found in the cytoplasm. It catalyses the reaction L-homoserine + ATP = O-phospho-L-homoserine + ADP + H(+). It functions in the pathway amino-acid biosynthesis; L-threonine biosynthesis; L-threonine from L-aspartate: step 4/5. In terms of biological role, catalyzes the ATP-dependent phosphorylation of L-homoserine to L-homoserine phosphate. The polypeptide is Homoserine kinase (Clostridium botulinum (strain Loch Maree / Type A3)).